Here is a 214-residue protein sequence, read N- to C-terminus: Calcineurin B homologous protein 3 (214 aa).

Residues 1 to 20 are disordered; the sequence is MGAAHSASEEVRELEGKTGF. G2 is lipidated: N-myristoyl glycine. The span at 7 to 16 shows a compositional bias: basic and acidic residues; it reads ASEEVRELEG. The EF-hand domain maps to 110–145; sequence SRKEKLRFLFHMYDSDSDGRITLEEYRNVVEELLSG. Residues D123, D125, D127, R129, and E134 each coordinate Ca(2+).

It belongs to the calcineurin regulatory subunit family. CHP subfamily. In terms of assembly, monomer. Homodimer; disulfide-linked. Interacts with SLC9A1/NHE1; the interaction enables an optimal Na(+)/H(+) exchange activity. Expressed in mature megakaryocytes and polymorphonuclear granulocytes (at protein level). Abundantly expressed in heart. Also expressed at a lower level in adult testis and salivary gland, and in the placenta.

The protein resides in the nucleus. It is found in the cytoplasm. Its subcellular location is the membrane. It localises to the cell membrane. The protein localises to the cell projection. The protein resides in the lamellipodium. It is found in the ruffle membrane. Functions as an integral cofactor in cell pH regulation by controlling plasma membrane-type Na(+)/H(+) exchange activity. Promotes the maturation, transport, cell surface stability and exchange activity of SLC9A1/NHE1 at the plasma membrane. Promotes the induction of hematopoietic stem cell differentiation toward megakaryocytic lineage. Essential for the coupling of ERK cascade activation with the expression of ETS family genes in megakaryocytic differentiation. Also involved in granulocytic differentiation in a ERK-dependent manner. Inhibits the phosphatase activity of calcineurin. In Homo sapiens (Human), this protein is Calcineurin B homologous protein 3 (TESC).